The sequence spans 215 residues: Protein-L-isoaspartate O-methyltransferase (215 aa).

Ser62 is an active-site residue.

It belongs to the methyltransferase superfamily. L-isoaspartyl/D-aspartyl protein methyltransferase family.

It is found in the cytoplasm. The catalysed reaction is [protein]-L-isoaspartate + S-adenosyl-L-methionine = [protein]-L-isoaspartate alpha-methyl ester + S-adenosyl-L-homocysteine. Catalyzes the methyl esterification of L-isoaspartyl residues in peptides and proteins that result from spontaneous decomposition of normal L-aspartyl and L-asparaginyl residues. It plays a role in the repair and/or degradation of damaged proteins. The sequence is that of Protein-L-isoaspartate O-methyltransferase from Ruegeria sp. (strain TM1040) (Silicibacter sp.).